A 1139-amino-acid chain; its full sequence is Dual 3',5'-cyclic-AMP and -GMP phosphodiesterase beta (1139 aa).

Disordered stretches follow at residues 1–42 (MGKV…NINK) and 154–177 (GISE…STSN). At 1-429 (MGKVEDFEEH…LNLNNWISSR (429 aa)) the chain is on the cytoplasmic side. Over residues 9 to 22 (EHNKNSNQDIEKNV) the composition is skewed to basic and acidic residues. A compositionally biased stretch (polar residues) spans 29–42 (NSNTINDQNENINK). The helical transmembrane segment at 430–450 (MIIIGIVMLILSFIIWPLTTW) threads the bilayer. Residues 451–462 (SLKTSTWGRETY) are Extracellular-facing. The helical transmembrane segment at 463–483 (IIILFHTLMAINTLILIFFII) threads the bilayer. Residues 484–498 (IGSTELCKYSECMSY) are Cytoplasmic-facing. Residues 499–519 (VLFSLMVALWGLWNIAIGLTL) traverse the membrane as a helical segment. Over 520–536 (EYNPNLSEMPTTTYELE) the chain is Extracellular. An N-linked (GlcNAc...) asparagine glycan is attached at N524. A helical membrane pass occupies residues 537 to 557 (MIYVLTYIYGFLPLVIIDIFF). Residues 558-564 (PSRTKYN) are Cytoplasmic-facing. Residues 565-585 (WIIHLIFIFLNSSSIILVGSA) form a helical membrane-spanning segment. Residues 586 to 592 (KPDFVPE) are Extracellular-facing. Residues 593-613 (IYVVFRILAYTTLCIFLYIGS) traverse the membrane as a helical segment. At 614 to 1139 (YTSELQIRYV…TLFFIKNVSD (526 aa)) the chain is on the cytoplasmic side. Residues 775–1098 (INISQLTKMI…IMWDTLMKEE (324 aa)) enclose the PDEase domain. H847 (proton donor) is an active-site residue. A nucleoside 3',5'-cyclic phosphate is bound at residue 847 to 851 (HNTIH). 4 residues coordinate a divalent metal cation: H851, H887, D888, and D1000. Residues D888, D1000, and Q1052 each contribute to the a nucleoside 3',5'-cyclic phosphate site.

The protein belongs to the cyclic nucleotide phosphodiesterase family. It depends on a divalent metal cation as a cofactor.

It localises to the cell membrane. The protein resides in the endoplasmic reticulum membrane. The catalysed reaction is 3',5'-cyclic GMP + H2O = GMP + H(+). The enzyme catalyses 3',5'-cyclic AMP + H2O = AMP + H(+). It participates in purine metabolism; 3',5'-cyclic GMP degradation; GMP from 3',5'-cyclic GMP: step 1/1. It functions in the pathway purine metabolism; 3',5'-cyclic AMP degradation; AMP from 3',5'-cyclic AMP: step 1/1. Functionally, plays a role in signal transduction by regulating the intracellular concentration of cyclic nucleotides cAMP and cGMP. Catalyzes the hydrolysis of both cAMP and cGMP to 5'-AMP and 5'-GMP, respectively. By regulating cAMP levels during the asexual blood stage and, thus PKA activation, required for merozoite invasion of erythrocytes and for the parasite development immediately following invasion. The sequence is that of Dual 3',5'-cyclic-AMP and -GMP phosphodiesterase beta from Plasmodium falciparum (isolate 3D7).